We begin with the raw amino-acid sequence, 453 residues long: Adenosylmethionine-8-amino-7-oxononanoate aminotransferase (453 aa).

118–119 contacts pyridoxal 5'-phosphate; it reads GA. Residue Y151 coordinates substrate. Position 257 (D257) interacts with pyridoxal 5'-phosphate. The substrate site is built by K286, G321, and R416. K286 bears the N6-(pyridoxal phosphate)lysine mark.

Belongs to the class-III pyridoxal-phosphate-dependent aminotransferase family. BioA subfamily. Homodimer. Pyridoxal 5'-phosphate serves as cofactor.

The protein localises to the cytoplasm. The catalysed reaction is (8S)-8-amino-7-oxononanoate + S-adenosyl-L-methionine = S-adenosyl-4-methylsulfanyl-2-oxobutanoate + (7R,8S)-7,8-diammoniononanoate. It functions in the pathway cofactor biosynthesis; biotin biosynthesis; 7,8-diaminononanoate from 8-amino-7-oxononanoate (SAM route): step 1/1. Catalyzes the transfer of the alpha-amino group from S-adenosyl-L-methionine (SAM) to 7-keto-8-aminopelargonic acid (KAPA) to form 7,8-diaminopelargonic acid (DAPA). It is the only aminotransferase known to utilize SAM as an amino donor. This Aquifex aeolicus (strain VF5) protein is Adenosylmethionine-8-amino-7-oxononanoate aminotransferase.